A 201-amino-acid chain; its full sequence is Natural cytotoxicity triggering receptor 3 (201 aa).

The N-terminal stretch at 1-18 (MAWMLLLILIMVYPGSCA) is a signal peptide. An Ig-like domain is found at 19–126 (LWVSQPPEIR…VGTGNGTRLV (108 aa)). The Extracellular segment spans residues 19 to 133 (LWVSQPPEIR…RLVVEKEYPQ (115 aa)). Residues Cys-39 and Cys-108 are joined by a disulfide bond. Residues Asn-42 and Asn-121 are each glycosylated (N-linked (GlcNAc...) asparagine). A helical membrane pass occupies residues 134–154 (LGAGTVLLLRAGFYAVSFLSV). At 155-201 (AMGSTLYYQGKCLTWKGPRRQLPAVVPGPLPPPCGSSAHLLPPVPGG) the chain is on the cytoplasmic side.

The protein belongs to the natural cytotoxicity receptor (NCR) family. In terms of assembly, homodimer in the unliganted form. Interacts with CD3Z. Interacts with and is activated by binding to NCR3LG1. Interacts with and is activated by binding to BAG6. Interacts with and is inhibited by binding to LGALS3.

The protein localises to the cell membrane. In terms of biological role, cell membrane receptor of natural killer/NK cells that is activated by binding of extracellular ligands including BAG6 and NCR3LG1. Stimulates NK cells cytotoxicity toward neighboring cells producing these ligands. It controls, for instance, NK cells cytotoxicity against tumor cells. Engagement of NCR3 by BAG6 also promotes myeloid dendritic cells (DC) maturation, both through killing DCs that did not acquire a mature phenotype, and inducing the release by NK cells of TNFA and IFNG that promote DC maturation. This chain is Natural cytotoxicity triggering receptor 3 (NCR3), found in Macaca mulatta (Rhesus macaque).